A 156-amino-acid polypeptide reads, in one-letter code: Xanthocillin biosynthesis cluster protein D (156 aa).

2 N-linked (GlcNAc...) asparagine glycosylation sites follow: asparagine 107 and asparagine 120. Residues 131–153 (IHLNAIALVATVWYGFTLSSSLL) form a helical membrane-spanning segment.

Its subcellular location is the membrane. It functions in the pathway secondary metabolite biosynthesis. Part of the gene cluster that mediates the biosynthesis of the isocyanide xanthocillin and its derivatives. The first step of the pathway consists in the conversion of tyrosine into a vinyl-isonitrile intermediate by the isocyanide synthase xanB. Subsequent oxidative dimerization of this intermediate to form xanthocillin may involve the cytochrome P450 monooxygenase xanG, whose expression is coregulated with that of XanB. Xanthocillin can be further modified by the isonitrile hydratase-like protein xanA which introduces N-formyl groups and the methyltransferase xanE which introduces methyl groups, leading to the production of several derivatives including fumiformamide. Finally, fumiformamide can be subject to both oxidative and reductive cyclization to yield melanocins E and F, respectively. The sequence is that of Xanthocillin biosynthesis cluster protein D from Aspergillus fumigatus (strain ATCC MYA-4609 / CBS 101355 / FGSC A1100 / Af293) (Neosartorya fumigata).